The primary structure comprises 656 residues: Leucine-rich repeat-containing protein 43 (656 aa).

Residues 1 to 13 (MEASYESESESES) show a composition bias toward acidic residues. The interval 1–25 (MEASYESESESESEAGPGTQRPGTG) is disordered. 4 LRR repeats span residues 150–170 (KLEELVLSANRIKEVDATNLP), 172–193 (TLKVLELYGNEISSMECLCAHP), 196–215 (GLQHLGLGHNKLLGPLESLY), and 223–244 (NLVSLDLGFNDLTDLQSMVTSL). Positions 258–296 (NPLALVPYYRGLTIDSLAQLCVLDDITVSPNEKHLFRGL) constitute an LRRCT domain. Positions 512-554 (LSAKKGKGEKDKKGKEKDRTGKGEKEPAKEWKVLKKKKEPPKE) are disordered. Positions 517–544 (GKGEKDKKGKEKDRTGKGEKEPAKEWKV) are enriched in basic and acidic residues.

In Homo sapiens (Human), this protein is Leucine-rich repeat-containing protein 43 (LRRC43).